Here is a 171-residue protein sequence, read N- to C-terminus: Transcription factor pcr1 (171 aa).

The bZIP domain occupies 10 to 73 (DEKRRRILER…FRLKSQLLAH (64 aa)). Residues 12 to 51 (KRRRILERNRIAASKFRQKKKEWIKELEQTANAAFEQSKR) are basic motif. A leucine-zipper region spans residues 52-66 (LQLLLSQLQQEAFRL). The segment at 125-171 (QMHPSLQGLPPNQHPQMPPSSQQPNSDDVQQHMFSAAGLPRSLGGPI) is disordered. The segment covering 143 to 152 (PSSQQPNSDD) has biased composition (low complexity).

The protein belongs to the bZIP family. Heterodimer of pcr1/mts2 and atf1/mts1.

It is found in the nucleus. In terms of biological role, involved in regulation of gene expression for sexual development. Binds and activates CRE sites (cAMP-response elements, also known as M26 meiotic recombination hotspots). This Schizosaccharomyces pombe (strain 972 / ATCC 24843) (Fission yeast) protein is Transcription factor pcr1 (pcr1).